Here is a 169-residue protein sequence, read N- to C-terminus: Transmembrane protein 89 (169 aa).

The N-terminal stretch at 1–22 (MLYTLLLVPSLFLLVMPVPSQG) is a signal peptide. The Extracellular segment spans residues 23-75 (WSRPLWYQVGLDLQPWGCQPNSPDIWGCQPNSLDSCKNSLGCPGYWLGLGGNR). Residues 76 to 96 (IYPVAGVTITTTMLLVVSRVI) form a helical membrane-spanning segment. The Cytoplasmic segment spans residues 97–169 (VHRWRAKVAK…QIKGSPPQSG (73 aa)).

The protein localises to the membrane. The sequence is that of Transmembrane protein 89 (Tmem89) from Mus musculus (Mouse).